We begin with the raw amino-acid sequence, 79 residues long: Exodeoxyribonuclease 7 small subunit (79 aa).

The protein belongs to the XseB family. As to quaternary structure, heterooligomer composed of large and small subunits.

It localises to the cytoplasm. The catalysed reaction is Exonucleolytic cleavage in either 5'- to 3'- or 3'- to 5'-direction to yield nucleoside 5'-phosphates.. Bidirectionally degrades single-stranded DNA into large acid-insoluble oligonucleotides, which are then degraded further into small acid-soluble oligonucleotides. The polypeptide is Exodeoxyribonuclease 7 small subunit (Lactococcus lactis subsp. cremoris (strain MG1363)).